The chain runs to 226 residues: MFSSAVRALCRTVPTVATRQLSTSRALLSLRPLGPKNTVPAFKGTAVVDGDFKVISDQDYKGKWLVMFFYPLDFTFVCPTEIIAYGDRANEFRSLGAEVVACSCDSHFSHLAWVNTPRKDGGLGDMDIPLLADFNKKIADSFGVLDKESGLSYRGLFLIDPSGTVRHTTCNDLPVGRSVDETLRVLKAFQFSDKHGEVCPADWHEDSPTIKPGVATSKEYFNKVNK.

The 159-residue stretch at 33-191 (LGPKNTVPAF…TLRVLKAFQF (159 aa)) folds into the Thioredoxin domain. Catalysis depends on cysteine 78, which acts as the Cysteine sulfenic acid (-SOH) intermediate.

Belongs to the peroxiredoxin family. AhpC/Prx1 subfamily. Homodimer; disulfide-linked, upon oxidation.

It catalyses the reaction a hydroperoxide + [thioredoxin]-dithiol = an alcohol + [thioredoxin]-disulfide + H2O. In terms of biological role, thiol-specific peroxidase that catalyzes the reduction of hydrogen peroxide and organic hydroperoxides to water and alcohols, respectively. Plays a role in cell protection against oxidative stress by detoxifying peroxides and as sensor of hydrogen peroxide-mediated signaling events. The protein is Probable peroxiredoxin prdx-3 (prdx-3) of Caenorhabditis elegans.